The sequence spans 252 residues: Triosephosphate isomerase (252 aa).

9–11 (NWK) is a substrate binding site. Catalysis depends on histidine 100, which acts as the Electrophile. Glutamate 171 acts as the Proton acceptor in catalysis. Substrate contacts are provided by residues glycine 177, serine 216, and 237 to 238 (GG).

It belongs to the triosephosphate isomerase family. Homodimer.

The protein resides in the cytoplasm. The catalysed reaction is D-glyceraldehyde 3-phosphate = dihydroxyacetone phosphate. Its pathway is carbohydrate biosynthesis; gluconeogenesis. The protein operates within carbohydrate degradation; glycolysis; D-glyceraldehyde 3-phosphate from glycerone phosphate: step 1/1. In terms of biological role, involved in the gluconeogenesis. Catalyzes stereospecifically the conversion of dihydroxyacetone phosphate (DHAP) to D-glyceraldehyde-3-phosphate (G3P). The chain is Triosephosphate isomerase from Polynucleobacter asymbioticus (strain DSM 18221 / CIP 109841 / QLW-P1DMWA-1) (Polynucleobacter necessarius subsp. asymbioticus).